We begin with the raw amino-acid sequence, 343 residues long: Glycerol-3-phosphate dehydrogenase [NAD(P)+] (343 aa).

Residues Ser-11, Trp-12, His-32, Arg-33, and Lys-106 each coordinate NADPH. 3 residues coordinate sn-glycerol 3-phosphate: Lys-106, Gly-136, and Ser-138. Position 140 (Ala-140) interacts with NADPH. Sn-glycerol 3-phosphate-binding residues include Lys-192, Asp-245, Ser-255, Arg-256, and Asn-257. Residue Lys-192 is the Proton acceptor of the active site. Residue Arg-256 coordinates NADPH. Val-280 and Glu-282 together coordinate NADPH.

The protein belongs to the NAD-dependent glycerol-3-phosphate dehydrogenase family.

It is found in the cytoplasm. The catalysed reaction is sn-glycerol 3-phosphate + NAD(+) = dihydroxyacetone phosphate + NADH + H(+). The enzyme catalyses sn-glycerol 3-phosphate + NADP(+) = dihydroxyacetone phosphate + NADPH + H(+). Its pathway is membrane lipid metabolism; glycerophospholipid metabolism. Its function is as follows. Catalyzes the reduction of the glycolytic intermediate dihydroxyacetone phosphate (DHAP) to sn-glycerol 3-phosphate (G3P), the key precursor for phospholipid synthesis. The polypeptide is Glycerol-3-phosphate dehydrogenase [NAD(P)+] (Geobacillus thermodenitrificans (strain NG80-2)).